Reading from the N-terminus, the 91-residue chain is Small ribosomal subunit protein uS19 (91 aa).

This sequence belongs to the universal ribosomal protein uS19 family.

In terms of biological role, protein S19 forms a complex with S13 that binds strongly to the 16S ribosomal RNA. The protein is Small ribosomal subunit protein uS19 of Actinobacillus pleuropneumoniae serotype 7 (strain AP76).